A 445-amino-acid chain; its full sequence is Tyrosine--tRNA ligase, mitochondrial (445 aa).

Tyr-33 contacts L-tyrosine. Residue Asp-37 coordinates ATP. Residues 38 to 47 carry the 'HIGH' region motif; sequence PTAASLHVGN. Residues Asp-77, Tyr-184, Gln-188, Asp-191, and Gln-210 each contribute to the L-tyrosine site. Positions 245–249 match the 'KMSKS' region motif; it reads KLGKS. ATP is bound at residue Lys-248. Residues 384–445 enclose the S4 RNA-binding domain; it reads QPFSRLLRTL…GKRTFVLDSL (62 aa).

This sequence belongs to the class-I aminoacyl-tRNA synthetase family. Homodimer.

It is found in the mitochondrion matrix. The catalysed reaction is tRNA(Tyr) + L-tyrosine + ATP = L-tyrosyl-tRNA(Tyr) + AMP + diphosphate + H(+). Catalyzes the attachment of tyrosine to tRNA(Tyr) in a two-step reaction: tyrosine is first activated by ATP to form Tyr-AMP and then transferred to the acceptor end of tRNA(Tyr). The chain is Tyrosine--tRNA ligase, mitochondrial from Schizosaccharomyces pombe (strain 972 / ATCC 24843) (Fission yeast).